Reading from the N-terminus, the 299-residue chain is Small ribosomal subunit protein uS3 (299 aa).

The 69-residue stretch at 39–107 folds into the KH type-2 domain; the sequence is VREYLKAKLK…PVAVNIEEVR (69 aa). The interval 214–299 is disordered; sequence PVIKTDERED…AVAPGDAKGE (86 aa). A compositionally biased stretch (basic and acidic residues) spans 217–248; the sequence is KTDEREDDRRNRRGPRSDRPAGDRRPPSRDGA. Residues 257–282 show a composition bias toward low complexity; that stretch reads ADAGAAAPTDKPADGAAPAAADGPKA.

The protein belongs to the universal ribosomal protein uS3 family. As to quaternary structure, part of the 30S ribosomal subunit. Forms a tight complex with proteins S10 and S14.

Functionally, binds the lower part of the 30S subunit head. Binds mRNA in the 70S ribosome, positioning it for translation. This is Small ribosomal subunit protein uS3 from Methylibium petroleiphilum (strain ATCC BAA-1232 / LMG 22953 / PM1).